The sequence spans 418 residues: Serine--tRNA ligase (418 aa).

Thr-227–Glu-229 contributes to the L-serine binding site. ATP is bound by residues Arg-258–Glu-260 and Val-274. Glu-281 is a binding site for L-serine. Glu-345–Ser-348 contributes to the ATP binding site. L-serine is bound at residue Thr-380.

The protein belongs to the class-II aminoacyl-tRNA synthetase family. Type-1 seryl-tRNA synthetase subfamily. As to quaternary structure, homodimer. The tRNA molecule binds across the dimer.

It localises to the cytoplasm. The catalysed reaction is tRNA(Ser) + L-serine + ATP = L-seryl-tRNA(Ser) + AMP + diphosphate + H(+). It carries out the reaction tRNA(Sec) + L-serine + ATP = L-seryl-tRNA(Sec) + AMP + diphosphate + H(+). The protein operates within aminoacyl-tRNA biosynthesis; selenocysteinyl-tRNA(Sec) biosynthesis; L-seryl-tRNA(Sec) from L-serine and tRNA(Sec): step 1/1. Catalyzes the attachment of serine to tRNA(Ser). Is also able to aminoacylate tRNA(Sec) with serine, to form the misacylated tRNA L-seryl-tRNA(Sec), which will be further converted into selenocysteinyl-tRNA(Sec). This chain is Serine--tRNA ligase, found in Rhodococcus jostii (strain RHA1).